We begin with the raw amino-acid sequence, 212 residues long: MSEHPLPASVAATLEQGLASMGLDAALAPPLLRYLALLHRWNGTYNLTAIRDPQEMVTRHLLDSLAMQPFVADGSLADLGTGPGLPGIPLAIACPGLQVTLVESNGKKARFMREAVRQLGLGNARVAESRAEALDEAGRYDQLTARAMDTLAGIVRVGGHLLRPGGVLLAMKGVYPHEEIAELPAGWQVREVTPLSVPGLAGERHLVTVTGP.

S-adenosyl-L-methionine is bound by residues G80, L85, 131–132 (AE), and R146.

This sequence belongs to the methyltransferase superfamily. RNA methyltransferase RsmG family.

The protein resides in the cytoplasm. It catalyses the reaction guanosine(527) in 16S rRNA + S-adenosyl-L-methionine = N(7)-methylguanosine(527) in 16S rRNA + S-adenosyl-L-homocysteine. Its function is as follows. Specifically methylates the N7 position of guanine in position 527 of 16S rRNA. The sequence is that of Ribosomal RNA small subunit methyltransferase G from Stenotrophomonas maltophilia (strain K279a).